We begin with the raw amino-acid sequence, 246 residues long: TVP38/TMEM64 family membrane protein MT0653 (246 aa).

A run of 5 helical transmembrane segments spans residues 19–39 (LVVF…TDVI), 57–77 (LTYV…PILA), 83–103 (LFGP…TAVV), 157–177 (AFGT…IGSA), and 196–216 (LLAS…AFAA).

Belongs to the TVP38/TMEM64 family.

It localises to the cell membrane. In Mycobacterium tuberculosis (strain CDC 1551 / Oshkosh), this protein is TVP38/TMEM64 family membrane protein MT0653.